We begin with the raw amino-acid sequence, 357 residues long: UDP-N-acetylglucosamine--N-acetylmuramyl-(pentapeptide) pyrophosphoryl-undecaprenol N-acetylglucosamine transferase (357 aa).

Residues 15 to 17 (TGG), N124, R165, S191, and Q285 contribute to the UDP-N-acetyl-alpha-D-glucosamine site.

It belongs to the glycosyltransferase 28 family. MurG subfamily.

The protein resides in the cell inner membrane. The catalysed reaction is di-trans,octa-cis-undecaprenyl diphospho-N-acetyl-alpha-D-muramoyl-L-alanyl-D-glutamyl-meso-2,6-diaminopimeloyl-D-alanyl-D-alanine + UDP-N-acetyl-alpha-D-glucosamine = di-trans,octa-cis-undecaprenyl diphospho-[N-acetyl-alpha-D-glucosaminyl-(1-&gt;4)]-N-acetyl-alpha-D-muramoyl-L-alanyl-D-glutamyl-meso-2,6-diaminopimeloyl-D-alanyl-D-alanine + UDP + H(+). It participates in cell wall biogenesis; peptidoglycan biosynthesis. Cell wall formation. Catalyzes the transfer of a GlcNAc subunit on undecaprenyl-pyrophosphoryl-MurNAc-pentapeptide (lipid intermediate I) to form undecaprenyl-pyrophosphoryl-MurNAc-(pentapeptide)GlcNAc (lipid intermediate II). The polypeptide is UDP-N-acetylglucosamine--N-acetylmuramyl-(pentapeptide) pyrophosphoryl-undecaprenol N-acetylglucosamine transferase (Microcystis aeruginosa (strain NIES-843 / IAM M-2473)).